The sequence spans 653 residues: Protease 1 (653 aa).

The or 27 signal peptide spans 1 to 20; that stretch reads MKRICGSLLLLGLSISAALA. Residues 21-205 constitute a propeptide that is removed on maturation; the sequence is APASRPAAFD…RRLAAASGEK (185 aa). 3 disulfide bridges follow: Cys211/Cys421, Cys217/Cys285, and Cys241/Cys263. Residues His262, Asp318, and Ser399 each act as charge relay system in the active site. A PKD domain is found at 474–553; sequence NTPPVANFTS…TNTKTGSVTV (80 aa). A propeptide spans 474–653 (thr/Ser-rich); it reads NTPPVANFTS…AAQRAPGSCG (180 aa). In terms of domain architecture, P/Homo B spans 555–653; sequence GGPGAQTYTN…AAQRAPGSCG (99 aa).

The protein belongs to the peptidase S1 family. Three disulfide bonds are present.

The protein localises to the secreted. The enzyme catalyses Preferential cleavage: Lys-|-Xaa, including Lys-|-Pro.. The chain is Protease 1 from Achromobacter lyticus.